The sequence spans 396 residues: Elongation factor Tu (396 aa).

Positions 10 to 206 (KPHVNVGTIG…ALDSYIPTPE (197 aa)) constitute a tr-type G domain. The segment at 19–26 (GHVDHGKT) is G1. A GTP-binding site is contributed by 19-26 (GHVDHGKT). Mg(2+) is bound at residue threonine 26. A G2 region spans residues 60 to 64 (GITIN). The G3 stretch occupies residues 81 to 84 (DCPG). GTP-binding positions include 81 to 85 (DCPGH) and 136 to 139 (NKCD). A G4 region spans residues 136 to 139 (NKCD). The tract at residues 174–176 (SAK) is G5.

This sequence belongs to the TRAFAC class translation factor GTPase superfamily. Classic translation factor GTPase family. EF-Tu/EF-1A subfamily. Monomer.

It localises to the cytoplasm. It carries out the reaction GTP + H2O = GDP + phosphate + H(+). GTP hydrolase that promotes the GTP-dependent binding of aminoacyl-tRNA to the A-site of ribosomes during protein biosynthesis. In Methylibium petroleiphilum (strain ATCC BAA-1232 / LMG 22953 / PM1), this protein is Elongation factor Tu.